The chain runs to 70 residues: Putative membrane protein insertion efficiency factor (70 aa).

It belongs to the UPF0161 family.

The protein resides in the cell inner membrane. Its function is as follows. Could be involved in insertion of integral membrane proteins into the membrane. This is Putative membrane protein insertion efficiency factor from Methylobacillus flagellatus (strain ATCC 51484 / DSM 6875 / VKM B-1610 / KT).